The chain runs to 230 residues: Ureidoacrylate amidohydrolase RutB (230 aa).

The active-site Proton acceptor is the aspartate 24. Lysine 133 is a catalytic residue. The active-site Nucleophile is the cysteine 166.

Belongs to the isochorismatase family. RutB subfamily.

It carries out the reaction (Z)-3-ureidoacrylate + H2O + H(+) = (Z)-3-aminoacrylate + NH4(+) + CO2. It catalyses the reaction (Z)-3-ureidoacrylate + H2O = (Z)-3-aminoacrylate + carbamate + H(+). The enzyme catalyses (Z)-2-methylureidoacrylate + H2O + H(+) = (Z)-2-methylaminoacrylate + NH4(+) + CO2. Its function is as follows. Hydrolyzes ureidoacrylate to form aminoacrylate and carbamate. The carbamate hydrolyzes spontaneously, thereby releasing one of the nitrogen atoms of the pyrimidine ring as ammonia and one of its carbon atoms as CO2. This is Ureidoacrylate amidohydrolase RutB from Enterobacter sp. (strain 638).